A 403-amino-acid polypeptide reads, in one-letter code: Probable protein phosphatase 2C 8 (403 aa).

Residues 42-80 form a disordered region; it reads LGRTASAVAEDDAAKRVRPASDSSSDSSESAKVAPEPTA. Over residues 62–71 the composition is skewed to low complexity; sequence SDSSSDSSES. Residues 90–388 form the PPM-type phosphatase domain; the sequence is SHGAVSVIGR…DNISVVVVEL (299 aa). Residues Asp-144, Gly-145, Asp-325, and Asp-379 each coordinate Mn(2+).

The protein belongs to the PP2C family. Mg(2+) is required as a cofactor. The cofactor is Mn(2+).

It catalyses the reaction O-phospho-L-seryl-[protein] + H2O = L-seryl-[protein] + phosphate. The catalysed reaction is O-phospho-L-threonyl-[protein] + H2O = L-threonyl-[protein] + phosphate. This is Probable protein phosphatase 2C 8 from Oryza sativa subsp. japonica (Rice).